The following is a 160-amino-acid chain: MSQLKVVYPGTFDPITRGHEDIVRRAAGLFDHVVVAVAKSPGKHPMFTLDERVDLASSILSDCPNVEVLGFSGLLMHFVREQGARAVVRGLRAVSDFEYEFQLAGMNRQLFPEMETIFLTPAEQHMFVSASLVREIAQLKGDISQFVSPLVQERITLKLA.

Residue T11 coordinates substrate. Residues 11 to 12 (TF) and H19 each bind ATP. The substrate site is built by K43, L75, and R89. ATP-binding positions include 90–92 (GLR), E100, and 125–131 (HMFVSAS).

This sequence belongs to the bacterial CoaD family. Homohexamer. The cofactor is Mg(2+).

It is found in the cytoplasm. The enzyme catalyses (R)-4'-phosphopantetheine + ATP + H(+) = 3'-dephospho-CoA + diphosphate. The protein operates within cofactor biosynthesis; coenzyme A biosynthesis; CoA from (R)-pantothenate: step 4/5. Its function is as follows. Reversibly transfers an adenylyl group from ATP to 4'-phosphopantetheine, yielding dephospho-CoA (dPCoA) and pyrophosphate. The chain is Phosphopantetheine adenylyltransferase from Methylobacillus flagellatus (strain ATCC 51484 / DSM 6875 / VKM B-1610 / KT).